A 310-amino-acid chain; its full sequence is ADP-L-glycero-D-manno-heptose-6-epimerase (310 aa).

NADP(+) contacts are provided by residues 10–11 (FI), 31–32 (DN), lysine 38, lysine 53, 75–79 (EGACS), and asparagine 92. The Proton acceptor role is filled by tyrosine 140. Residue lysine 144 coordinates NADP(+). Position 169 (asparagine 169) interacts with substrate. NADP(+)-binding residues include valine 170 and lysine 178. Catalysis depends on lysine 178, which acts as the Proton acceptor. Substrate-binding positions include serine 180, histidine 187, 201 to 204 (FEGS), and arginine 209. Residue lysine 267 is modified to N6-acetyllysine. Tyrosine 272 lines the substrate pocket.

Belongs to the NAD(P)-dependent epimerase/dehydratase family. HldD subfamily. Homopentamer. NADP(+) is required as a cofactor.

It carries out the reaction ADP-D-glycero-beta-D-manno-heptose = ADP-L-glycero-beta-D-manno-heptose. It functions in the pathway nucleotide-sugar biosynthesis; ADP-L-glycero-beta-D-manno-heptose biosynthesis; ADP-L-glycero-beta-D-manno-heptose from D-glycero-beta-D-manno-heptose 7-phosphate: step 4/4. Its function is as follows. Catalyzes the interconversion between ADP-D-glycero-beta-D-manno-heptose and ADP-L-glycero-beta-D-manno-heptose via an epimerization at carbon 6 of the heptose. The sequence is that of ADP-L-glycero-D-manno-heptose-6-epimerase from Escherichia coli (strain SMS-3-5 / SECEC).